The primary structure comprises 312 residues: Methionyl-tRNA formyltransferase (312 aa).

107–110 (SLLP) serves as a coordination point for (6S)-5,6,7,8-tetrahydrofolate.

It belongs to the Fmt family.

It carries out the reaction L-methionyl-tRNA(fMet) + (6R)-10-formyltetrahydrofolate = N-formyl-L-methionyl-tRNA(fMet) + (6S)-5,6,7,8-tetrahydrofolate + H(+). Functionally, attaches a formyl group to the free amino group of methionyl-tRNA(fMet). The formyl group appears to play a dual role in the initiator identity of N-formylmethionyl-tRNA by promoting its recognition by IF2 and preventing the misappropriation of this tRNA by the elongation apparatus. This Endomicrobium trichonymphae protein is Methionyl-tRNA formyltransferase.